Reading from the N-terminus, the 126-residue chain is MADMKWAVAHIKSSFNNTIITVTDITGAETIAKSSGGMVVKAARDESSPYTAMQMAGQLADQLKDKGINGIHIRVRAPGGNKQRSPGPGAQAAIRAFARAGIRIGRIEDVTPVPHDGTRPKGGRRV.

It belongs to the universal ribosomal protein uS11 family. In terms of assembly, part of the 30S ribosomal subunit.

Located on the platform of the 30S subunit. This chain is Small ribosomal subunit protein uS11, found in Methanosarcina acetivorans (strain ATCC 35395 / DSM 2834 / JCM 12185 / C2A).